Consider the following 398-residue polypeptide: 1-deoxy-D-xylulose 5-phosphate reductoisomerase (398 aa).

NADPH is bound by residues Thr11, Gly12, Ser13, Ile14, and Asn125. Residue Lys126 coordinates 1-deoxy-D-xylulose 5-phosphate. Glu127 is an NADPH binding site. Asp151 is a binding site for Mn(2+). Ser152, Glu153, Ser186, and His209 together coordinate 1-deoxy-D-xylulose 5-phosphate. Residue Glu153 participates in Mn(2+) binding. Gly215 contacts NADPH. The 1-deoxy-D-xylulose 5-phosphate site is built by Ser222, Asn227, Lys228, and Glu231. Glu231 is a Mn(2+) binding site.

This sequence belongs to the DXR family. Mg(2+) serves as cofactor. The cofactor is Mn(2+).

The catalysed reaction is 2-C-methyl-D-erythritol 4-phosphate + NADP(+) = 1-deoxy-D-xylulose 5-phosphate + NADPH + H(+). It participates in isoprenoid biosynthesis; isopentenyl diphosphate biosynthesis via DXP pathway; isopentenyl diphosphate from 1-deoxy-D-xylulose 5-phosphate: step 1/6. Its function is as follows. Catalyzes the NADPH-dependent rearrangement and reduction of 1-deoxy-D-xylulose-5-phosphate (DXP) to 2-C-methyl-D-erythritol 4-phosphate (MEP). This Acinetobacter baumannii (strain ACICU) protein is 1-deoxy-D-xylulose 5-phosphate reductoisomerase.